An 876-amino-acid chain; its full sequence is Radial spoke head 10 homolog B (876 aa).

Residues 1-16 are compositionally biased toward basic and acidic residues; the sequence is MVKEKKKADKKGDKSA. The segment at 1-71 is disordered; the sequence is MVKEKKKADK…VQMEQSEEET (71 aa). Residues 17 to 37 show a composition bias toward polar residues; that stretch reads RSPSSISDNPEASKQDSNASK. Over residues 39–50 the composition is skewed to low complexity; sequence EVAPSAVVPVVE. MORN repeat units follow at residues 86–108, 109–129, 132–154, 155–172, 179–196, 204–225, 227–244, 251–268, 284–305, and 307–328; these read YEGEKVRGLYEGEGFAVFQGGNT, YHGMFSEGLMHGQGTYIWADG, YEGDFVKNIPMNHGVYTWPDGST, YEGEVTNGMRNGFGMFKC, YIGHWCHGKRHGKGSIYY, YEGDWVYNIKKGWGIRCYKSGN, YEGQWENNMRHGEGRMRW, YTGHWEKGIQNGFGTHTW, YIGEFVNGFRHGQGKFYYASGA, and YEGEWASNKKQGRGRMTFKNGH. Residues 356-372 are compositionally biased toward polar residues; it reads WSDASQRSRQPRGSSVS. The tract at residues 356 to 386 is disordered; that stretch reads WSDASQRSRQPRGSSVSAVREPETLRKLDGS. Positions 375 to 386 are enriched in basic and acidic residues; the sequence is REPETLRKLDGS. Residues 790–832 adopt a coiled-coil conformation; that stretch reads LKEKVKENQLQEAELAQQRQIENEELEARLNILREEEARKQDF. The tract at residues 839-876 is disordered; sequence LKEPSEIPASQPLTPSPPKEDLASIQTSKASPGKKKKK.

In terms of assembly, interacts with RSPH6A. Does not appear to be part of the axonemal radial spoke complexes 1 or 2. As to expression, expressed in ependymal cells (at protein level).

Its subcellular location is the cytoplasm. It is found in the cytoskeleton. The protein localises to the cilium axoneme. It localises to the cell projection. The protein resides in the cilium. Its subcellular location is the flagellum. In terms of biological role, may function as part of the axonemal radial spoke complex 3 (RS3). Radial spoke complexes are important for ciliary motility. The chain is Radial spoke head 10 homolog B from Mus musculus (Mouse).